The following is a 187-amino-acid chain: Peptidyl-tRNA hydrolase (187 aa).

Residue Tyr15 coordinates tRNA. The active-site Proton acceptor is the His20. Residues Tyr64, Asn66, and Asn112 each coordinate tRNA.

The protein belongs to the PTH family. As to quaternary structure, monomer.

It localises to the cytoplasm. It carries out the reaction an N-acyl-L-alpha-aminoacyl-tRNA + H2O = an N-acyl-L-amino acid + a tRNA + H(+). Its function is as follows. Hydrolyzes ribosome-free peptidyl-tRNAs (with 1 or more amino acids incorporated), which drop off the ribosome during protein synthesis, or as a result of ribosome stalling. Catalyzes the release of premature peptidyl moieties from peptidyl-tRNA molecules trapped in stalled 50S ribosomal subunits, and thus maintains levels of free tRNAs and 50S ribosomes. The polypeptide is Peptidyl-tRNA hydrolase (Phocaeicola vulgatus (strain ATCC 8482 / DSM 1447 / JCM 5826 / CCUG 4940 / NBRC 14291 / NCTC 11154) (Bacteroides vulgatus)).